The following is a 917-amino-acid chain: Protein translocase subunit SecA (917 aa).

ATP is bound by residues Gln87, 105-109 (GEGKT), and Asp516. Zn(2+) is bound by residues Cys901, Cys903, Cys912, and His913.

This sequence belongs to the SecA family. Monomer and homodimer. Part of the essential Sec protein translocation apparatus which comprises SecA, SecYEG and auxiliary proteins SecDF-YajC and YidC. Requires Zn(2+) as cofactor.

The protein localises to the cell inner membrane. The protein resides in the cytoplasm. The enzyme catalyses ATP + H2O + cellular proteinSide 1 = ADP + phosphate + cellular proteinSide 2.. Functionally, part of the Sec protein translocase complex. Interacts with the SecYEG preprotein conducting channel. Has a central role in coupling the hydrolysis of ATP to the transfer of proteins into and across the cell membrane, serving both as a receptor for the preprotein-SecB complex and as an ATP-driven molecular motor driving the stepwise translocation of polypeptide chains across the membrane. The polypeptide is Protein translocase subunit SecA (Verminephrobacter eiseniae (strain EF01-2)).